A 362-amino-acid chain; its full sequence is Peptide chain release factor 1 (362 aa).

Gln235 is modified (N5-methylglutamine).

Belongs to the prokaryotic/mitochondrial release factor family. Methylated by PrmC. Methylation increases the termination efficiency of RF1.

It localises to the cytoplasm. Functionally, peptide chain release factor 1 directs the termination of translation in response to the peptide chain termination codons UAG and UAA. In Acinetobacter baumannii (strain ACICU), this protein is Peptide chain release factor 1.